The following is a 475-amino-acid chain: Ribulose bisphosphate carboxylase large chain (475 aa).

A propeptide spanning residues 1-2 (MS) is cleaved from the precursor. N-acetylproline is present on proline 3. Position 14 is an N6,N6,N6-trimethyllysine (lysine 14). The substrate site is built by asparagine 123 and threonine 173. Lysine 175 serves as the catalytic Proton acceptor. Lysine 177 is a binding site for substrate. Mg(2+)-binding residues include lysine 201, aspartate 203, and glutamate 204. Position 201 is an N6-carboxylysine (lysine 201). The active-site Proton acceptor is the histidine 294. Residues arginine 295, histidine 327, and serine 379 each contribute to the substrate site.

The protein belongs to the RuBisCO large chain family. Type I subfamily. Heterohexadecamer of 8 large chains and 8 small chains; disulfide-linked. The disulfide link is formed within the large subunit homodimers. The cofactor is Mg(2+). The disulfide bond which can form in the large chain dimeric partners within the hexadecamer appears to be associated with oxidative stress and protein turnover.

Its subcellular location is the plastid. It localises to the chloroplast. It catalyses the reaction 2 (2R)-3-phosphoglycerate + 2 H(+) = D-ribulose 1,5-bisphosphate + CO2 + H2O. It carries out the reaction D-ribulose 1,5-bisphosphate + O2 = 2-phosphoglycolate + (2R)-3-phosphoglycerate + 2 H(+). In terms of biological role, ruBisCO catalyzes two reactions: the carboxylation of D-ribulose 1,5-bisphosphate, the primary event in carbon dioxide fixation, as well as the oxidative fragmentation of the pentose substrate in the photorespiration process. Both reactions occur simultaneously and in competition at the same active site. This Cucumis sativus (Cucumber) protein is Ribulose bisphosphate carboxylase large chain (rbcL).